Consider the following 327-residue polypeptide: Phenylalanine--tRNA ligase alpha subunit (327 aa).

Glu-252 lines the Mg(2+) pocket.

This sequence belongs to the class-II aminoacyl-tRNA synthetase family. Phe-tRNA synthetase alpha subunit type 1 subfamily. As to quaternary structure, tetramer of two alpha and two beta subunits. Requires Mg(2+) as cofactor.

The protein resides in the cytoplasm. It catalyses the reaction tRNA(Phe) + L-phenylalanine + ATP = L-phenylalanyl-tRNA(Phe) + AMP + diphosphate + H(+). In Shigella dysenteriae serotype 1 (strain Sd197), this protein is Phenylalanine--tRNA ligase alpha subunit.